The sequence spans 493 residues: Glycylpeptide N-tetradecanoyltransferase (493 aa).

A tetradecanoyl-CoA-binding site is contributed by 45 to 48; that stretch reads HKFW. The disordered stretch occupies residues 53-73; sequence VPQITGSGAPAPIEEGPIDDP. Residues 182–184 and 190–194 each bind tetradecanoyl-CoA; these read LCV and SKRLA. Leu-493 (proton acceptor; via carboxylate) is an active-site residue.

The protein belongs to the NMT family. In terms of assembly, monomer.

The protein localises to the cytoplasm. It carries out the reaction N-terminal glycyl-[protein] + tetradecanoyl-CoA = N-tetradecanoylglycyl-[protein] + CoA + H(+). Adds a myristoyl group to the N-terminal glycine residue of certain cellular proteins. The polypeptide is Glycylpeptide N-tetradecanoyltransferase (Cryptococcus neoformans var. neoformans serotype D (strain B-3501A) (Filobasidiella neoformans)).